Reading from the N-terminus, the 410-residue chain is Elongation factor Tu, chloroplastic (410 aa).

Positions Lys10 to Lys215 constitute a tr-type G domain. The interval Gly19–Thr26 is G1. Gly19–Thr26 serves as a coordination point for GTP. Thr26 lines the Mg(2+) pocket. Positions Gly61 to Asn65 are G2. The segment at Asp82 to Gly85 is G3. GTP is bound by residues Asp82 to His86 and Asn137 to Asp140. The G4 stretch occupies residues Asn137–Asp140. The tract at residues Ser175–Leu177 is G5.

The protein belongs to the TRAFAC class translation factor GTPase superfamily. Classic translation factor GTPase family. EF-Tu/EF-1A subfamily.

The protein resides in the plastid. The protein localises to the chloroplast. The catalysed reaction is GTP + H2O = GDP + phosphate + H(+). Its function is as follows. GTP hydrolase that promotes the GTP-dependent binding of aminoacyl-tRNA to the A-site of ribosomes during protein biosynthesis. The polypeptide is Elongation factor Tu, chloroplastic (tufA) (Nephroselmis olivacea (Green alga)).